Consider the following 137-residue polypeptide: Large ribosomal subunit protein uL22 (137 aa).

This sequence belongs to the universal ribosomal protein uL22 family. In terms of assembly, part of the 50S ribosomal subunit.

Functionally, this protein binds specifically to 23S rRNA; its binding is stimulated by other ribosomal proteins, e.g. L4, L17, and L20. It is important during the early stages of 50S assembly. It makes multiple contacts with different domains of the 23S rRNA in the assembled 50S subunit and ribosome. The globular domain of the protein is located near the polypeptide exit tunnel on the outside of the subunit, while an extended beta-hairpin is found that lines the wall of the exit tunnel in the center of the 70S ribosome. This is Large ribosomal subunit protein uL22 from Flavobacterium johnsoniae (strain ATCC 17061 / DSM 2064 / JCM 8514 / BCRC 14874 / CCUG 350202 / NBRC 14942 / NCIMB 11054 / UW101) (Cytophaga johnsonae).